The following is a 440-amino-acid chain: Peroxisome proliferator-activated receptor delta (440 aa).

A disordered region spans residues 1–53 (MEQPQEETPEAREEEKEEVAMGDGAPELNGGPEHTLPSSSCADLSQNSSPSSL). The segment covering 36–53 (LPSSSCADLSQNSSPSSL) has biased composition (polar residues). The nuclear receptor DNA-binding region spans 70 to 144 (NMECRVCGDK…LGMSHNAIRF (75 aa)). 2 NR C4-type zinc fingers span residues 73–93 (CRVCGDKASGFHYGVHACEGC) and 110–132 (CDRICKIQKKNRNKCQYCRFQKC). The region spanning 210–438 (FVIHDIETLW…HPLLQEIYKD (229 aa)) is the NR LBD domain.

The protein belongs to the nuclear hormone receptor family. NR1 subfamily. Heterodimer with the retinoid X receptor. Interacts (via domain NR LBD) with CRY1 and CRY2 in a ligand-dependent manner. In terms of processing, 'Lys-48'-linked polyubiquitinated; leading to proteasomal degradation. Deubiquitinated and stabilized by OTUD3. As to expression, heart, adrenal and intestine.

Its subcellular location is the nucleus. In terms of biological role, ligand-activated transcription factor key mediator of energy metabolism in adipose tissues. Receptor that binds peroxisome proliferators such as hypolipidemic drugs and fatty acids. Has a preference for poly-unsaturated fatty acids, such as gamma-linoleic acid and eicosapentanoic acid. Once activated by a ligand, the receptor binds to promoter elements of target genes. Regulates the peroxisomal beta-oxidation pathway of fatty acids. Functions as transcription activator for the acyl-CoA oxidase gene. Decreases expression of NPC1L1 once activated by a ligand. This Mus musculus (Mouse) protein is Peroxisome proliferator-activated receptor delta (Ppard).